Here is a 309-residue protein sequence, read N- to C-terminus: Glutaminase (309 aa).

Substrate contacts are provided by S64, N114, E160, N167, Y191, Y243, and V261.

It belongs to the glutaminase family. As to quaternary structure, homotetramer.

It catalyses the reaction L-glutamine + H2O = L-glutamate + NH4(+). This chain is Glutaminase, found in Rhizobium leguminosarum bv. trifolii (strain WSM2304).